Consider the following 398-residue polypeptide: MISYSLPNERPNDFSRVIPVVKDIIESVKTKGDNALYELTEKLDKVKIDNIKAREEELKTQASKLDPKVKQAIDTAYEQLKAFHEMLVPPNIGGGYQGISFGVIWRSIEKIGIYVPSGKYSYPSTLLMAGIPAKVAKVKEIYVASPPTQEGTVNPALAYVAIKLGVNEVYKIGGAQAIAALAFGTESVKKVYKIVGPGNVYVQAAKYLVSSVVGIDGIEGPTELVIIADETAKAEYVALDMKAQAEHGPDTYIVLLSNDDELIRRVEEKIKNDKKIYYIIKTKNLDEAIEIANKIAPEHLSLYVKDAYTLMDKIVNAGAISLGNTPPAIIDYVAGPNHILPTNGWAKIRGGITVYDFIKPTMYANVRDINKQLLEASISLANYEGFIIHGKSIGARYE.

NAD(+)-binding residues include Y114, Q176, and N199. T222, Q244, and H247 together coordinate substrate. 2 residues coordinate Zn(2+): Q244 and H247. Active-site proton acceptor residues include E298 and H299. Substrate-binding residues include H299, D331, E384, and H389. D331 contacts Zn(2+). Zn(2+) is bound at residue H389.

This sequence belongs to the histidinol dehydrogenase family. Zn(2+) is required as a cofactor.

The catalysed reaction is L-histidinol + 2 NAD(+) + H2O = L-histidine + 2 NADH + 3 H(+). The protein operates within amino-acid biosynthesis; L-histidine biosynthesis; L-histidine from 5-phospho-alpha-D-ribose 1-diphosphate: step 9/9. Catalyzes the sequential NAD-dependent oxidations of L-histidinol to L-histidinaldehyde and then to L-histidine. The polypeptide is Histidinol dehydrogenase (hisD) (Saccharolobus solfataricus (strain ATCC 35092 / DSM 1617 / JCM 11322 / P2) (Sulfolobus solfataricus)).